Consider the following 62-residue polypeptide: MKPESFDLTIEQMFEFRRMQDATANISQEQALELLVQASRLLMIKSNVIRDLMRQAPLEPLG.

To Synechococcus PCC 7942 NblA and some, to chloroplast ycf18.

The polypeptide is Phycobilisome degradation protein NblA homolog 1 (Synechocystis sp. (strain ATCC 27184 / PCC 6803 / Kazusa)).